The primary structure comprises 367 residues: MRFNEVLKDVSTYEAGKPIELVVREYGIDSKDVIKLASNENPYGTSPKVIAKIQELAKNMCLYPDDSMYELKDALAKKYNLESSNIIIGSGSDQILEFCIHAKCKKDSKILMAKTTFAMYEIYGKHVGAEIIKTNSEQHNLEEFSELYKKHGADIIFLCIPNNPLGECLDKNDVYEFLKTIDKNTLVVVDGAYQEYAAFKDEKKRICPKDLIDTFPNAIYLGTFSKAYSLGGMRVGYGFAQNEIIQNLYKIRAPFNITTLSLAAAIEALKDEEFVNDCISKNFEEMKRYEEYVTKKGFEYIPSYTNFITIKFGDKYVSKEVAQKLLERGMIVRDLTSYKQNAIRVTIGKPEQNTKLFQLLDEVLQNL.

An N6-(pyridoxal phosphate)lysine modification is found at K226.

The protein belongs to the class-II pyridoxal-phosphate-dependent aminotransferase family. Histidinol-phosphate aminotransferase subfamily. As to quaternary structure, homodimer. Requires pyridoxal 5'-phosphate as cofactor.

The enzyme catalyses L-histidinol phosphate + 2-oxoglutarate = 3-(imidazol-4-yl)-2-oxopropyl phosphate + L-glutamate. Its pathway is amino-acid biosynthesis; L-histidine biosynthesis; L-histidine from 5-phospho-alpha-D-ribose 1-diphosphate: step 7/9. This is Histidinol-phosphate aminotransferase from Aliarcobacter butzleri (strain RM4018) (Arcobacter butzleri).